The following is a 324-amino-acid chain: ATP-dependent 6-phosphofructokinase (324 aa).

ATP is bound at residue glycine 11. An ADP-binding site is contributed by 21 to 25 (RAVVR). Residues 72–73 (RE) and 102–105 (GNGS) each bind ATP. Asparagine 103 lines the Mg(2+) pocket. 126-128 (TID) contacts substrate. Aspartate 128 (proton acceptor) is an active-site residue. ADP is bound at residue arginine 155. Substrate contacts are provided by residues arginine 163 and 170–172 (MGR). ADP contacts are provided by residues 186-188 (GAD), arginine 212, and 214-216 (KKF). Residues glutamate 223, arginine 248, and 254–257 (YIQR) each bind substrate.

Belongs to the phosphofructokinase type A (PFKA) family. ATP-dependent PFK group I subfamily. Prokaryotic clade 'B1' sub-subfamily. As to quaternary structure, homotetramer. Requires Mg(2+) as cofactor.

The protein resides in the cytoplasm. It catalyses the reaction beta-D-fructose 6-phosphate + ATP = beta-D-fructose 1,6-bisphosphate + ADP + H(+). It participates in carbohydrate degradation; glycolysis; D-glyceraldehyde 3-phosphate and glycerone phosphate from D-glucose: step 3/4. Its activity is regulated as follows. Allosterically activated by ADP and other diphosphonucleosides, and allosterically inhibited by phosphoenolpyruvate. Its function is as follows. Catalyzes the phosphorylation of D-fructose 6-phosphate to fructose 1,6-bisphosphate by ATP, the first committing step of glycolysis. In Persephonella marina (strain DSM 14350 / EX-H1), this protein is ATP-dependent 6-phosphofructokinase.